Consider the following 279-residue polypeptide: NADPH-dependent 7-cyano-7-deazaguanine reductase (279 aa).

86-88 contributes to the substrate binding site; that stretch reads IES. Position 88–89 (88–89) interacts with NADPH; it reads SK. Cysteine 187 serves as the catalytic Thioimide intermediate. The Proton donor role is filled by aspartate 194. Residue 226-227 coordinates substrate; the sequence is HE. Position 255–256 (255–256) interacts with NADPH; it reads RG.

Belongs to the GTP cyclohydrolase I family. QueF type 2 subfamily. In terms of assembly, homodimer.

Its subcellular location is the cytoplasm. It carries out the reaction 7-aminomethyl-7-carbaguanine + 2 NADP(+) = 7-cyano-7-deazaguanine + 2 NADPH + 3 H(+). It participates in tRNA modification; tRNA-queuosine biosynthesis. Functionally, catalyzes the NADPH-dependent reduction of 7-cyano-7-deazaguanine (preQ0) to 7-aminomethyl-7-deazaguanine (preQ1). The protein is NADPH-dependent 7-cyano-7-deazaguanine reductase of Glaesserella parasuis serovar 5 (strain SH0165) (Haemophilus parasuis).